A 512-amino-acid polypeptide reads, in one-letter code: Protein arginine N-methyltransferase 2 (512 aa).

A disordered region spans residues 67–103 (TSNIDDLPLPPPIQEVEEEEPTQQNIEQQQQTQDESD). Residues 88-99 (TQQNIEQQQQTQ) show a composition bias toward low complexity. The region spanning 120-508 (DEEYFSSYSK…KTNPFDYSYQ (389 aa)) is the SAM-dependent MTase PRMT-type domain. The S-adenosyl-L-methionine site is built by H133, R142, G166, and E217. Active-site residues include E231 and E240. Residues 375 to 395 (DDDDNDNNNNNNDNSNDDENK) form a disordered region.

This sequence belongs to the class I-like SAM-binding methyltransferase superfamily. Protein arginine N-methyltransferase family.

It localises to the cytoplasm. The protein resides in the nucleus. The enzyme catalyses L-arginyl-[protein] + 2 S-adenosyl-L-methionine = N(omega),N(omega)-dimethyl-L-arginyl-[protein] + 2 S-adenosyl-L-homocysteine + 2 H(+). Arginine methyltransferase that methylates the guanidino nitrogens of arginyl residues in some proteins such as histones. The chain is Protein arginine N-methyltransferase 2 (prmt2) from Dictyostelium discoideum (Social amoeba).